A 365-amino-acid polypeptide reads, in one-letter code: Sesquiterpene synthase 3 (365 aa).

Mg(2+)-binding residues include Asp-117, Asn-253, Ser-257, and Glu-261. The DDXXD motif motif lies at 117–121 (DDWSD). Residues 253–261 (NDILSYNRE) carry the NSE/DTE motif motif. (2E,6E)-farnesyl diphosphate-binding residues include Arg-341 and Tyr-342.

Belongs to the terpene synthase family. Mg(2+) serves as cofactor.

It carries out the reaction (2E,6E)-farnesyl diphosphate = delta-cadinene + diphosphate. Terpene cyclase that catalyzes the cyclization of farnesyl diphosphate (FPP) to various sesquiterpenes, including beta-elemene gamma-cadinene, delta-cadinene, and alpha-cadinene. This chain is Sesquiterpene synthase 3, found in Postia placenta (strain ATCC 44394 / Madison 698-R) (Brown rot fungus).